The primary structure comprises 119 residues: Beta-2-microglobulin (119 aa).

A signal peptide spans 1–20 (MARSVVAALLVLLSLSGLEA). The Ig-like C1-type domain maps to 25 to 114 (PKIQVYSRHP…VTFPTPKTVK (90 aa)). A disulfide bridge connects residues Cys-45 and Cys-100.

It belongs to the beta-2-microglobulin family. In terms of assembly, heterodimer of an alpha chain and a beta chain. Beta-2-microglobulin is the beta-chain of major histocompatibility complex class I molecules.

The protein localises to the secreted. Component of the class I major histocompatibility complex (MHC). Involved in the presentation of peptide antigens to the immune system. The sequence is that of Beta-2-microglobulin (B2M) from Saimiri boliviensis boliviensis (Bolivian squirrel monkey).